The chain runs to 66 residues: Putative membrane protein insertion efficiency factor (66 aa).

Belongs to the UPF0161 family.

The protein localises to the cell inner membrane. Could be involved in insertion of integral membrane proteins into the membrane. The chain is Putative membrane protein insertion efficiency factor from Parasynechococcus marenigrum (strain WH8102).